The primary structure comprises 266 residues: Type III pantothenate kinase (266 aa).

Position 6-13 (6-13) interacts with ATP; it reads DVGNSHTV. Residue 112–115 coordinates substrate; sequence GIDR. Aspartate 114 acts as the Proton acceptor in catalysis. Position 134 (aspartate 134) interacts with K(+). Threonine 137 contacts ATP. Threonine 190 is a binding site for substrate.

The protein belongs to the type III pantothenate kinase family. Homodimer. NH4(+) is required as a cofactor. Requires K(+) as cofactor.

It is found in the cytoplasm. The enzyme catalyses (R)-pantothenate + ATP = (R)-4'-phosphopantothenate + ADP + H(+). The protein operates within cofactor biosynthesis; coenzyme A biosynthesis; CoA from (R)-pantothenate: step 1/5. Catalyzes the phosphorylation of pantothenate (Pan), the first step in CoA biosynthesis. This Desulfotalea psychrophila (strain LSv54 / DSM 12343) protein is Type III pantothenate kinase.